Consider the following 520-residue polypeptide: MSAKISIFQALVFLFYRFILRRYRNSKPKYQNGPSSLLQSDLSRHTLIFNVEGALLKSDSLFPYFMLVAFEAGGVIRSFLLFILYPLISLMSHEMGVKVMVMVSFFGIKKEGFRAGRAVLPKYFLEDVGLEMFEVLKRGGKKIGVSDDLPQVMIEGFLRDYLEIDVVVGREMKVVGGYYLGIMEDKTKHDLVFDELVRKERLNTGRVIGITSFNTSLHRYLFSQFCQEIYFVKKSDKRSWQTLPRSQYPKPLIFHDGRLAIKPTLMNTLVLFMWGPFAAAAAAARLFVSLCIPYSLSIPILAFSGCRLTVTNDYVSSQKQKPSQRKGCLFVCNHRTLLDPLYVAFALRKKNIKTVTYSLSRVSEILAPIKTVRLTRDRVSDGQAMEKLLTEGDLVVCPEGTTCREPYLLRFSPLFTEVSDVIVPVAVTVHVTFFYGTTASGLKALDPLFFLLDPYPTYTIQFLDPVSGATCQDPDGKLKFEVANNVQSDIGKALDFECTSLTRKDKYLILAGNNGVVKKN.

5 consecutive transmembrane segments (helical) span residues 5 to 20, 64 to 84, 88 to 108, 264 to 284, and 286 to 306; these read ISIF…RFIL, YFML…LFIL, ISLM…FFGI, TLMN…AAAA, and LFVS…FSGC. Positions 334 to 339 match the HXXXXD motif motif; that stretch reads HRTLLD.

The protein belongs to the GPAT/DAPAT family. In terms of tissue distribution, widely expressed at low level. Expressed at higher level in seedlings and leaves.

Its subcellular location is the membrane. The enzyme catalyses sn-glycerol 3-phosphate + an acyl-CoA = a 1-acyl-sn-glycero-3-phosphate + CoA. Its pathway is phospholipid metabolism; CDP-diacylglycerol biosynthesis; CDP-diacylglycerol from sn-glycerol 3-phosphate: step 1/3. Esterifies acyl-group from acyl-ACP to the sn-1 position of glycerol-3-phosphate, an essential step in glycerolipid biosynthesis. The chain is Probable glycerol-3-phosphate acyltransferase 3 (GPAT3) from Arabidopsis thaliana (Mouse-ear cress).